We begin with the raw amino-acid sequence, 387 residues long: Diels-Alderase ORF3 (387 aa).

This sequence belongs to the Diels-Alderase family.

It participates in secondary metabolite biosynthesis. In terms of biological role, diels-Alderase; part of the gene cluster that mediates the biosynthesis of a tyrosine-derived cytochalasan acting as a fungal signal recognized by resistant rice plants and leads to avirulence in Pi33 resistant rice cultivars. The first step in the pathway is catalyzed by the hybrid PKS-NRPS ACE1, assisted by the enoyl reductase RAP1, that are responsible for fusion of the tyrosine precursor and the polyketide backbone. The polyketide synthase module (PKS) of ACE1 is responsible for the synthesis of the polyketide backbone and the downstream nonribosomal peptide synthetase (NRPS) amidates the carboxyl end of the polyketide with the tyrosine precursor. Because ACE1 lacks a designated enoylreductase (ER) domain, the required activity is provided the enoyl reductase RAP1. Reduction by the hydrolyase ORFZ, followed by dehydration and intra-molecular Diels-Alder cyclization by the Diels-Alderase ORF3 then yield the required isoindolone-fused macrocycle. A number of oxidative steps catalyzed by the tailoring enzymes identified within the cluster, including cytochrome P450 monooxygenases CYP1 to CYP4, the FAD-linked oxidoreductase OXR2 and the short-chain dehydrogenase/reductase OXR1, are further required to afford the final cytochalasans that confer avirulence and which have still to be identified. The monooxygenase CYP1 has been shown to be a site-selective C-18 hydroxylase whereas the function of CYP3 is the site-selective epoxidation of the C-6/C-7 olefin that is present in some intermediate compounds. Finally, SYN2 and RAP2 are not required for avirulence in Pi33 resistant rice cultivars. The sequence is that of Diels-Alderase ORF3 from Pyricularia oryzae (strain 70-15 / ATCC MYA-4617 / FGSC 8958) (Rice blast fungus).